Here is a 695-residue protein sequence, read N- to C-terminus: MQTFFIAPTDFGVGLTSISLGLVRTLERAGLKVGFFKPIAQPHPGDTGPERSTELVARTHGIKPPVPLSLAHVERMLGDGQLDELLEEIIRLYQQACVGNDVVVVEGMVPTRHASYAARVNLHLAKSLDAEVILVSAPENEVLSELSGRVELQAQLFGGPRDPKVLGVILNKVRTDESMADFATRLREHSPLLRGNDFRLLGCIPYQPELNAPRTRDVAELLGAQVLNAGDYEQRRMSKIIICARTVANTVPLLTSGTLVVTPGDRDDIILAVSLAAINGVPLAGLLLTSDSKPDVRILGLCRGALQAGLPILSVSTGSYDTANQLNSLNREIPVDDRERAEFITDFVASHLDAAWLHQRCGTPRELRLSPAVFRYQLIQRAQQANKRIVLPEGAEPLLVQAAAICQARGIARCVLLAKPEDVDAVARAQGITLPPGLEILDPELIRGRYVEPMVELRKSKNLNAPMAEQQLEDPVVIGTMMLALDEVDGLVSGLVHSTANTIRPALQLIKTAPGSSLVSSVFFMLFPEQVLVYGDCVMNPHPSAAELAEIAQQSAASAQAFGIAPRVAMISYSSDSASDEEVEKVREATRLAQDAAQELLIDGPLQYDAAANPAIARELAPASPVAGRATVFVFPDLNTGNTTHKAVQRSADGVSLGPMLQGLRKPVNDLPRGAQVDDIVHTIALTAIQASVAR.

The tract at residues 374–695 (FRYQLIQRAQ…LTAIQASVAR (322 aa)) is phosphate acetyltransferase.

It in the N-terminal section; belongs to the CobB/CobQ family. In the C-terminal section; belongs to the phosphate acetyltransferase and butyryltransferase family. In terms of assembly, homohexamer.

It is found in the cytoplasm. The enzyme catalyses acetyl-CoA + phosphate = acetyl phosphate + CoA. It functions in the pathway metabolic intermediate biosynthesis; acetyl-CoA biosynthesis; acetyl-CoA from acetate: step 2/2. Its function is as follows. Involved in acetate metabolism. This is Phosphate acetyltransferase (pta) from Pseudomonas putida (strain ATCC 47054 / DSM 6125 / CFBP 8728 / NCIMB 11950 / KT2440).